We begin with the raw amino-acid sequence, 207 residues long: Thiamine-phosphate synthase (207 aa).

Residues 36-40 and Asn-68 each bind 4-amino-2-methyl-5-(diphosphooxymethyl)pyrimidine; that span reads QLRMK. Residues Asp-69 and Asp-88 each contribute to the Mg(2+) site. Ser-106 is a 4-amino-2-methyl-5-(diphosphooxymethyl)pyrimidine binding site. 132–134 serves as a coordination point for 2-[(2R,5Z)-2-carboxy-4-methylthiazol-5(2H)-ylidene]ethyl phosphate; that stretch reads TNT. Position 135 (Lys-135) interacts with 4-amino-2-methyl-5-(diphosphooxymethyl)pyrimidine. Residues Gly-162 and 182 to 183 contribute to the 2-[(2R,5Z)-2-carboxy-4-methylthiazol-5(2H)-ylidene]ethyl phosphate site; that span reads VS.

This sequence belongs to the thiamine-phosphate synthase family. Mg(2+) serves as cofactor.

The enzyme catalyses 2-[(2R,5Z)-2-carboxy-4-methylthiazol-5(2H)-ylidene]ethyl phosphate + 4-amino-2-methyl-5-(diphosphooxymethyl)pyrimidine + 2 H(+) = thiamine phosphate + CO2 + diphosphate. The catalysed reaction is 2-(2-carboxy-4-methylthiazol-5-yl)ethyl phosphate + 4-amino-2-methyl-5-(diphosphooxymethyl)pyrimidine + 2 H(+) = thiamine phosphate + CO2 + diphosphate. It carries out the reaction 4-methyl-5-(2-phosphooxyethyl)-thiazole + 4-amino-2-methyl-5-(diphosphooxymethyl)pyrimidine + H(+) = thiamine phosphate + diphosphate. The protein operates within cofactor biosynthesis; thiamine diphosphate biosynthesis; thiamine phosphate from 4-amino-2-methyl-5-diphosphomethylpyrimidine and 4-methyl-5-(2-phosphoethyl)-thiazole: step 1/1. In terms of biological role, condenses 4-methyl-5-(beta-hydroxyethyl)thiazole monophosphate (THZ-P) and 2-methyl-4-amino-5-hydroxymethyl pyrimidine pyrophosphate (HMP-PP) to form thiamine monophosphate (TMP). In Methanococcus maripaludis (strain C5 / ATCC BAA-1333), this protein is Thiamine-phosphate synthase.